We begin with the raw amino-acid sequence, 337 residues long: Ketol-acid reductoisomerase (NADP(+)) (337 aa).

Residues Val3 to Thr183 enclose the KARI N-terminal Rossmann domain. Residues Tyr26–Gln29, Lys49, Ser52, Ser54, and Asp84–Gln87 contribute to the NADP(+) site. His109 is a catalytic residue. Residue Gly135 coordinates NADP(+). Positions Thr184–Val329 constitute a KARI C-terminal knotted domain. Residues Asp192, Glu196, Glu228, and Glu232 each contribute to the Mg(2+) site. Ser253 contributes to the substrate binding site.

The protein belongs to the ketol-acid reductoisomerase family. Mg(2+) is required as a cofactor.

It carries out the reaction (2R)-2,3-dihydroxy-3-methylbutanoate + NADP(+) = (2S)-2-acetolactate + NADPH + H(+). It catalyses the reaction (2R,3R)-2,3-dihydroxy-3-methylpentanoate + NADP(+) = (S)-2-ethyl-2-hydroxy-3-oxobutanoate + NADPH + H(+). It functions in the pathway amino-acid biosynthesis; L-isoleucine biosynthesis; L-isoleucine from 2-oxobutanoate: step 2/4. It participates in amino-acid biosynthesis; L-valine biosynthesis; L-valine from pyruvate: step 2/4. Functionally, involved in the biosynthesis of branched-chain amino acids (BCAA). Catalyzes an alkyl-migration followed by a ketol-acid reduction of (S)-2-acetolactate (S2AL) to yield (R)-2,3-dihydroxy-isovalerate. In the isomerase reaction, S2AL is rearranged via a Mg-dependent methyl migration to produce 3-hydroxy-3-methyl-2-ketobutyrate (HMKB). In the reductase reaction, this 2-ketoacid undergoes a metal-dependent reduction by NADPH to yield (R)-2,3-dihydroxy-isovalerate. The sequence is that of Ketol-acid reductoisomerase (NADP(+)) from Rhodococcus opacus (strain B4).